A 511-amino-acid polypeptide reads, in one-letter code: Phospho-2-dehydro-3-deoxyheptonate aldolase 2, chloroplastic (511 aa).

Belongs to the class-II DAHP synthase family. As to expression, leaves, stems, tuber and roots.

It is found in the plastid. It localises to the chloroplast. It catalyses the reaction D-erythrose 4-phosphate + phosphoenolpyruvate + H2O = 7-phospho-2-dehydro-3-deoxy-D-arabino-heptonate + phosphate. It functions in the pathway metabolic intermediate biosynthesis; chorismate biosynthesis; chorismate from D-erythrose 4-phosphate and phosphoenolpyruvate: step 1/7. The polypeptide is Phospho-2-dehydro-3-deoxyheptonate aldolase 2, chloroplastic (SHKB) (Solanum tuberosum (Potato)).